Here is a 332-residue protein sequence, read N- to C-terminus: 2-hydroxyacid dehydrogenase homolog 1 (332 aa).

NAD(+) is bound by residues 154 to 155, 233 to 235, and Asp259; these read RI and TSR. Arg235 is an active-site residue. Glu264 is a catalytic residue. His296 (proton donor) is an active-site residue. 296–299 is a binding site for NAD(+); the sequence is HQAF.

It belongs to the D-isomer specific 2-hydroxyacid dehydrogenase family.

The protein resides in the cytoplasm. It localises to the nucleus. The polypeptide is 2-hydroxyacid dehydrogenase homolog 1 (Schizosaccharomyces pombe (strain 972 / ATCC 24843) (Fission yeast)).